We begin with the raw amino-acid sequence, 141 residues long: Large ribosomal subunit protein uL11 (141 aa).

It belongs to the universal ribosomal protein uL11 family. In terms of assembly, part of the ribosomal stalk of the 50S ribosomal subunit. Interacts with L10 and the large rRNA to form the base of the stalk. L10 forms an elongated spine to which L12 dimers bind in a sequential fashion forming a multimeric L10(L12)X complex. Post-translationally, one or more lysine residues are methylated.

Forms part of the ribosomal stalk which helps the ribosome interact with GTP-bound translation factors. The protein is Large ribosomal subunit protein uL11 of Clostridium acetobutylicum (strain ATCC 824 / DSM 792 / JCM 1419 / IAM 19013 / LMG 5710 / NBRC 13948 / NRRL B-527 / VKM B-1787 / 2291 / W).